The following is a 227-amino-acid chain: Cytochrome c oxidase subunit 2 (227 aa).

Residues 1–14 (MAYPFQLGLQDATS) lie on the Mitochondrial intermembrane side of the membrane. A helical transmembrane segment spans residues 15–45 (PIMEELMNFHDHTLMIVFLISSLVLYIISLM). Residues 46–59 (LTTKLTHTSTMDAQ) are Mitochondrial matrix-facing. The helical transmembrane segment at 60 to 87 (EVETIWTILPAVILILIALPSLRILYMM) threads the bilayer. Residues 88–227 (DEINNPVLTV…NFENWSASMI (140 aa)) lie on the Mitochondrial intermembrane side of the membrane. Residues histidine 161, cysteine 196, glutamate 198, cysteine 200, histidine 204, and methionine 207 each contribute to the Cu cation site. Glutamate 198 contributes to the Mg(2+) binding site.

It belongs to the cytochrome c oxidase subunit 2 family. In terms of assembly, component of the cytochrome c oxidase (complex IV, CIV), a multisubunit enzyme composed of 14 subunits. The complex is composed of a catalytic core of 3 subunits MT-CO1, MT-CO2 and MT-CO3, encoded in the mitochondrial DNA, and 11 supernumerary subunits COX4I, COX5A, COX5B, COX6A, COX6B, COX6C, COX7A, COX7B, COX7C, COX8 and NDUFA4, which are encoded in the nuclear genome. The complex exists as a monomer or a dimer and forms supercomplexes (SCs) in the inner mitochondrial membrane with NADH-ubiquinone oxidoreductase (complex I, CI) and ubiquinol-cytochrome c oxidoreductase (cytochrome b-c1 complex, complex III, CIII), resulting in different assemblies (supercomplex SCI(1)III(2)IV(1) and megacomplex MCI(2)III(2)IV(2)). Found in a complex with TMEM177, COA6, COX18, COX20, SCO1 and SCO2. Interacts with TMEM177 in a COX20-dependent manner. Interacts with COX20. Interacts with COX16. It depends on Cu cation as a cofactor.

The protein localises to the mitochondrion inner membrane. It carries out the reaction 4 Fe(II)-[cytochrome c] + O2 + 8 H(+)(in) = 4 Fe(III)-[cytochrome c] + 2 H2O + 4 H(+)(out). Functionally, component of the cytochrome c oxidase, the last enzyme in the mitochondrial electron transport chain which drives oxidative phosphorylation. The respiratory chain contains 3 multisubunit complexes succinate dehydrogenase (complex II, CII), ubiquinol-cytochrome c oxidoreductase (cytochrome b-c1 complex, complex III, CIII) and cytochrome c oxidase (complex IV, CIV), that cooperate to transfer electrons derived from NADH and succinate to molecular oxygen, creating an electrochemical gradient over the inner membrane that drives transmembrane transport and the ATP synthase. Cytochrome c oxidase is the component of the respiratory chain that catalyzes the reduction of oxygen to water. Electrons originating from reduced cytochrome c in the intermembrane space (IMS) are transferred via the dinuclear copper A center (CU(A)) of subunit 2 and heme A of subunit 1 to the active site in subunit 1, a binuclear center (BNC) formed by heme A3 and copper B (CU(B)). The BNC reduces molecular oxygen to 2 water molecules using 4 electrons from cytochrome c in the IMS and 4 protons from the mitochondrial matrix. The sequence is that of Cytochrome c oxidase subunit 2 (MT-CO2) from Maxomys bartelsii (Bartels's Javan maxomys).